Consider the following 156-residue polypeptide: Small ribosomal subunit protein uS7 (156 aa).

This sequence belongs to the universal ribosomal protein uS7 family. In terms of assembly, part of the 30S ribosomal subunit. Contacts proteins S9 and S11.

Functionally, one of the primary rRNA binding proteins, it binds directly to 16S rRNA where it nucleates assembly of the head domain of the 30S subunit. Is located at the subunit interface close to the decoding center, probably blocks exit of the E-site tRNA. This Rhizobium johnstonii (strain DSM 114642 / LMG 32736 / 3841) (Rhizobium leguminosarum bv. viciae) protein is Small ribosomal subunit protein uS7.